Consider the following 496-residue polypeptide: Steroid 21-hydroxylase (496 aa).

Position 109 (Ser109) interacts with heme b. 17alpha-hydroxyprogesterone is bound at residue Arg232. Arg232 contacts progesterone. 3 residues coordinate heme b: His364, Arg425, and Cys427.

The protein belongs to the cytochrome P450 family. Heme b is required as a cofactor.

It is found in the endoplasmic reticulum membrane. Its subcellular location is the microsome membrane. It carries out the reaction progesterone + reduced [NADPH--hemoprotein reductase] + O2 = 21-hydroxyprogesterone + oxidized [NADPH--hemoprotein reductase] + H2O + H(+). It catalyses the reaction 17alpha-hydroxyprogesterone + reduced [NADPH--hemoprotein reductase] + O2 = 11-deoxycortisol + oxidized [NADPH--hemoprotein reductase] + H2O + H(+). Its function is as follows. A cytochrome P450 monooxygenase that plays a major role in adrenal steroidogenesis. Catalyzes the hydroxylation at C-21 of progesterone and 17alpha-hydroxyprogesterone to respectively form 11-deoxycorticosterone and 11-deoxycortisol, intermediate metabolites in the biosynthetic pathway of mineralocorticoids and glucocorticoids. Mechanistically, uses molecular oxygen inserting one oxygen atom into a substrate, and reducing the second into a water molecule, with two electrons provided by NADPH via cytochrome P450 reductase (CPR; NADPH-ferrihemoprotein reductase). In Bos taurus (Bovine), this protein is Steroid 21-hydroxylase (CYP21).